A 1102-amino-acid polypeptide reads, in one-letter code: Probable leucine-rich repeat receptor-like protein kinase At5g63930 (1102 aa).

An N-terminal signal peptide occupies residues 1 to 26 (MVKEMMKLAVFFISLLLILLISETTG). The Extracellular portion of the chain corresponds to 27 to 737 (LNLEGQYLLE…GKPGGMRSSK (711 aa)). Residues N54, N68, N79, and N119 are each glycosylated (N-linked (GlcNAc...) asparagine). LRR repeat units follow at residues 72–96 (DPEV…IGGL), 97–120 (VHLK…IGNC), 122–144 (SLEI…IGKL), 145–170 (VSLE…NLLS), 172–192 (SQLV…IGNL), 193–216 (KRLT…IGGC), 217–241 (ESLV…GMLK), 243–264 (LSQV…ISNC), 265–288 (TSLE…LGDL), 289–312 (QSLE…IGNL), 314–336 (YAIE…LGNI), 337–360 (EGLE…LSTL), 361–383 (KNLS…GFQY), 385–408 (RGLF…LGWY), 409–432 (SDLW…LCLH), 433–456 (SNMI…ITTC), 458–480 (TLVQ…LCKQ), 481–504 (VNVT…VGNC), 505–528 (SALQ…IGML), 529–552 (SQLG…IFNC), 554–576 (MLQR…VGSL), 577–602 (YQLE…NLSR), 604–624 (TELQ…LGSL), 625–649 (TGLQ…LSNL), 651–672 (MLEF…SFAN), and 674–700 (SSLL…SMSS). A glycan (N-linked (GlcNAc...) asparagine) is linked at N180. A glycan (N-linked (GlcNAc...) asparagine) is linked at N263. 2 N-linked (GlcNAc...) asparagine glycosylation sites follow: N302 and N311. N362 is a glycosylation site (N-linked (GlcNAc...) asparagine). N444 is a glycosylation site (N-linked (GlcNAc...) asparagine). Residues N482 and N503 are each glycosylated (N-linked (GlcNAc...) asparagine). N-linked (GlcNAc...) asparagine glycans are attached at residues N535, N564, N588, N599, N614, N632, N661, N672, N680, and N695. A helical transmembrane segment spans residues 738 to 758 (IIAITAAVIGGVSLMLIALIV). Topologically, residues 759–1102 (YLMRRPVRTV…TEELTQTTTP (344 aa)) are cytoplasmic. Phosphothreonine occurs at positions 793 and 801. The region spanning 804–1091 (FDESFVVGRG…ERSEGEQEHL (288 aa)) is the Protein kinase domain. ATP contacts are provided by residues 810–818 (VGRGACGTV) and K832. A phosphotyrosine mark is found at Y882 and Y919. The active-site Proton acceptor is the D932. The residue at position 966 (S966) is a Phosphoserine. Residues Y974 and Y981 each carry the phosphotyrosine modification. At T982 the chain carries Phosphothreonine.

This sequence belongs to the protein kinase superfamily. Ser/Thr protein kinase family.

Its subcellular location is the cell membrane. The catalysed reaction is L-seryl-[protein] + ATP = O-phospho-L-seryl-[protein] + ADP + H(+). The enzyme catalyses L-threonyl-[protein] + ATP = O-phospho-L-threonyl-[protein] + ADP + H(+). The chain is Probable leucine-rich repeat receptor-like protein kinase At5g63930 from Arabidopsis thaliana (Mouse-ear cress).